The primary structure comprises 105 residues: Large ribosomal subunit protein uL24 (105 aa).

It belongs to the universal ribosomal protein uL24 family. Part of the 50S ribosomal subunit.

In terms of biological role, one of two assembly initiator proteins, it binds directly to the 5'-end of the 23S rRNA, where it nucleates assembly of the 50S subunit. Its function is as follows. One of the proteins that surrounds the polypeptide exit tunnel on the outside of the subunit. In Beijerinckia indica subsp. indica (strain ATCC 9039 / DSM 1715 / NCIMB 8712), this protein is Large ribosomal subunit protein uL24.